The sequence spans 200 residues: Systemin (200 aa).

Residues 1-33 (MGTPSYDIKNKGDDMQEEPKVKLHHEKGGDEKE) are disordered. 2 propeptides span residues 1-178 (MGTP…REDL) and 197-200 (NNKL). One copy of the 1; truncated repeat lies at 3–8 (TPSYDI). Residues 8–33 (IKNKGDDMQEEPKVKLHHEKGGDEKE) show a composition bias toward basic and acidic residues. 4 tandem repeats follow at residues 37–45 (EKETPSQDI), 80–88 (EKETISQYI), 117–125 (EKETPSQDI), and 145–153 (DKETPSQDI). Disordered stretches follow at residues 106–159 (EEEE…MEGE) and 178–200 (LAVQSKPPSKRDPPKMQTDNNKL). Basic and acidic residues-rich tracts occupy residues 111-140 (EKEKIVEKETPSQDINNKGDDAQEKPKVEH) and 146-158 (KETPSQDIIKMEG).

As to expression, all organs except the roots. Transported out of wounds to distal tissues.

The protein resides in the cytoplasm. Activates a lipid-based signal transduction pathway in which linolenic acid is converted to jasmonic acid, a potent activator of defense gene transcription, including proteinase inhibitor. This chain is Systemin, found in Solanum lycopersicum (Tomato).